A 63-amino-acid chain; its full sequence is Large ribosomal subunit protein uL29 (63 aa).

The protein belongs to the universal ribosomal protein uL29 family.

This chain is Large ribosomal subunit protein uL29, found in Bacillus cereus (strain ATCC 14579 / DSM 31 / CCUG 7414 / JCM 2152 / NBRC 15305 / NCIMB 9373 / NCTC 2599 / NRRL B-3711).